The sequence spans 334 residues: Nucleoid-associated protein YPTS_1390 (334 aa).

This sequence belongs to the YejK family.

Its subcellular location is the cytoplasm. It localises to the nucleoid. The sequence is that of Nucleoid-associated protein YPTS_1390 from Yersinia pseudotuberculosis serotype IB (strain PB1/+).